A 349-amino-acid polypeptide reads, in one-letter code: Palmitoyltransferase PFA5 (349 aa).

The next 2 helical transmembrane spans lie at 19–39 (LIPF…CHQF) and 57–77 (LIIV…LMLV). One can recognise a DHHC domain in the interval 126–176 (IWCSNCQSLKMSRTHHSTKVGYCVPRFDHYCVWIGTVLGRLNYKLFVQFTF). The S-palmitoyl cysteine intermediate role is filled by cysteine 156. 2 consecutive transmembrane segments (helical) span residues 170-190 (LFVQ…ISIA) and 204-224 (VYAV…LFLT).

It belongs to the DHHC palmitoyltransferase family. PFA5 subfamily.

Its subcellular location is the membrane. It carries out the reaction L-cysteinyl-[protein] + hexadecanoyl-CoA = S-hexadecanoyl-L-cysteinyl-[protein] + CoA. This is Palmitoyltransferase PFA5 (PFA5) from Kluyveromyces lactis (strain ATCC 8585 / CBS 2359 / DSM 70799 / NBRC 1267 / NRRL Y-1140 / WM37) (Yeast).